The primary structure comprises 77 residues: Putative defensin-like protein 162 (77 aa).

An N-terminal signal peptide occupies residues 1–27 (MAKQLCSYMFISMFILSAFLALPSAEG). Cystine bridges form between Cys-34-Cys-77, Cys-44-Cys-63, Cys-49-Cys-71, and Cys-53-Cys-73.

It belongs to the DEFL family.

The protein localises to the secreted. The sequence is that of Putative defensin-like protein 162 (LCR37) from Arabidopsis thaliana (Mouse-ear cress).